Reading from the N-terminus, the 127-residue chain is MADLANLVEQLSSLTVLEAAELSKLLEEKWGVSAAAPVAVAAAAPAGGGAAAAPVEEKTEFNVILKSSGDKKINVIKEIRTITGLGLKEAKDLVEGAPKTVKEGVNKDEAEKIKKVLEEQGASVGIE.

This sequence belongs to the bacterial ribosomal protein bL12 family. As to quaternary structure, homodimer. Part of the ribosomal stalk of the 50S ribosomal subunit. Forms a multimeric L10(L12)X complex, where L10 forms an elongated spine to which 2 to 4 L12 dimers bind in a sequential fashion. Binds GTP-bound translation factors.

In terms of biological role, forms part of the ribosomal stalk which helps the ribosome interact with GTP-bound translation factors. Is thus essential for accurate translation. This Acidiphilium cryptum (strain JF-5) protein is Large ribosomal subunit protein bL12.